The chain runs to 501 residues: MEKVREIVREGRRVGKEDPRRVVHAFKVGLALALVSSFYYYQPLYDNFGVNAMWAVMTVVVVFEFSVGATLGKGLNRAVATLVAGGLGIGAHHLASLSGPTVEPILLAIFVFVLAALSTFVRFFPRVKARYDYGVLIFILTFALISVSGFREDEILDLAHKRLSTVIMGGVSCVLISIFVCPVWAGQDLHSLLASNFDTLSHFLQEFGDEYFEATEDGDIKEVEKRRRNLERYKSVLNSKSNEEALANFAKWEPRHGQFRFRHPWRQYLAVGALLRQSAYRIDALNSNINSDMQIPMDIKKKIEEPLRRMSSESGKSMKEVSISLKNMTISSSFDIHVVNSQSACKTLSTLLKSGILNDVEPLQMISLMTTVSLLIDIVNLTEKISESVHELASAAKFKNKKKPSKSNSGSIGQAMPNKSHDDDDHVVTILGDVDTSNNVDQSQSHGEISVDSCHHVTIKINDDDSIHDKNEDGDIHVHTNRVSCDHTNASDLLDSGVKKN.

6 helical membrane-spanning segments follow: residues 22–42 (VVHAFKVGLALALVSSFYYYQ), 52–72 (AMWAVMTVVVVFEFSVGATLG), 78–98 (AVATLVAGGLGIGAHHLASLS), 101–121 (TVEPILLAIFVFVLAALSTFV), 130–150 (RYDYGVLIFILTFALISVSGF), and 166–186 (VIMGGVSCVLISIFVCPVWAG). The tract at residues 398 to 425 (FKNKKKPSKSNSGSIGQAMPNKSHDDDD) is disordered.

This sequence belongs to the aromatic acid exporter (TC 2.A.85) family.

It localises to the membrane. Its function is as follows. Malate transporter. This chain is Aluminum-activated malate transporter 2 (ALMT2), found in Arabidopsis thaliana (Mouse-ear cress).